The sequence spans 307 residues: Protein pxr1 (307 aa).

Positions Met1 to Lys11 are enriched in basic residues. Disordered regions lie at residues Met1–Thr25 and Asn144–Asp234. The span at Asp15–Thr25 shows a compositional bias: polar residues. Positions Thr25–Lys79 constitute a G-patch domain. 2 stretches are compositionally biased toward basic and acidic residues: residues Leu154–Glu168 and Gly206–Gln221.

Belongs to the PINX1 family.

It is found in the nucleus. The protein localises to the nucleolus. Functionally, involved in rRNA-processing at A0, A1 and A2 sites and negatively regulates telomerase. The polypeptide is Protein pxr1 (pxr1) (Neosartorya fischeri (strain ATCC 1020 / DSM 3700 / CBS 544.65 / FGSC A1164 / JCM 1740 / NRRL 181 / WB 181) (Aspergillus fischerianus)).